Reading from the N-terminus, the 428-residue chain is Serine--tRNA ligase (428 aa).

Position 231-233 (Thr-231–Glu-233) interacts with L-serine. Position 262-264 (Arg-262–Glu-264) interacts with ATP. Position 285 (Glu-285) interacts with L-serine. Position 349–352 (Glu-349–Ser-352) interacts with ATP. Position 385 (Ser-385) interacts with L-serine.

This sequence belongs to the class-II aminoacyl-tRNA synthetase family. Type-1 seryl-tRNA synthetase subfamily. In terms of assembly, homodimer. The tRNA molecule binds across the dimer.

The protein localises to the cytoplasm. It catalyses the reaction tRNA(Ser) + L-serine + ATP = L-seryl-tRNA(Ser) + AMP + diphosphate + H(+). The enzyme catalyses tRNA(Sec) + L-serine + ATP = L-seryl-tRNA(Sec) + AMP + diphosphate + H(+). It participates in aminoacyl-tRNA biosynthesis; selenocysteinyl-tRNA(Sec) biosynthesis; L-seryl-tRNA(Sec) from L-serine and tRNA(Sec): step 1/1. Catalyzes the attachment of serine to tRNA(Ser). Is also able to aminoacylate tRNA(Sec) with serine, to form the misacylated tRNA L-seryl-tRNA(Sec), which will be further converted into selenocysteinyl-tRNA(Sec). In Staphylococcus aureus (strain MSSA476), this protein is Serine--tRNA ligase.